The chain runs to 933 residues: Potassium voltage-gated channel subfamily KQT member 5 (933 aa).

Residues 1 to 126 (MPRHHAGGEE…YNVLERPRGW (126 aa)) are Cytoplasmic-facing. Position 89 is a phosphoserine (S89). A helical transmembrane segment spans residues 127-147 (AFVYHAFVFLLVFGCLILSVF). The Extracellular portion of the chain corresponds to 148–157 (STIPEHTKLA). The chain crosses the membrane as a helical span at residues 158 to 178 (SSCLLILEFVMIVVFGLEFII). Topologically, residues 179–201 (RIWSAGCCCRYRGWQGRLRFARK) are cytoplasmic. A helical transmembrane segment spans residues 202–222 (PFCVIDTIVLIASIAVVSAKT). The Extracellular segment spans residues 223–230 (QGNIFATS). Residues 231–253 (ALRSLRFLQILRMVRMDRRGGTW) form a helical; Voltage-sensor membrane-spanning segment. Residues R249 and K265 each contribute to the a 1,2-diacyl-sn-glycero-3-phospho-(1D-myo-inositol-4,5-bisphosphate) site. At 254-267 (KLLGSVVYAHSKEL) the chain is on the cytoplasmic side. The chain crosses the membrane as a helical span at residues 268-288 (ITAWYIGFLVLIFSSFLVYLV). Residues 289–299 (EKDANKEFSTY) lie on the Extracellular side of the membrane. The segment at residues 300–320 (ADALWWGTITLTTIGYGDKTP) is an intramembrane region (pore-forming). At 321–326 (LTWLGR) the chain is on the extracellular side. A helical transmembrane segment spans residues 327-347 (LLSAGFALLGISFFALPAGIL). Residues 348–933 (GSGFALKVQE…ALSLPHVKLN (586 aa)) lie on the Cytoplasmic side of the membrane. K362 serves as a coordination point for a 1,2-diacyl-sn-glycero-3-phospho-(1D-myo-inositol-4,5-bisphosphate). The interaction with CALM stretch occupies residues 371–379 (AANLIQCVW). The segment at 405-465 (SPTKKEQGEA…EGSPTKVQKS (61 aa)) is disordered. Positions 432 to 441 (RGQSIKSRQA) are enriched in polar residues. A Phosphoserine modification is found at S448. The interval 522–529 (VIRAIRIM) is interaction with CALM. A disordered region spans residues 578–598 (KGQMTSDKKSREKITAEHETT). The span at 583–598 (SDKKSREKITAEHETT) shows a compositional bias: basic and acidic residues. Phosphoserine is present on S832. The segment at 878 to 933 (GAEETETDTFDGTPPPAGEAAFSSDSLRTGRSRSSQNICKTGDSTDALSLPHVKLN) is disordered. Over residues 900–924 (SSDSLRTGRSRSSQNICKTGDSTDA) the composition is skewed to polar residues.

The protein belongs to the potassium channel family. KQT (TC 1.A.1.15) subfamily. Kv7.5/KCNQ5 sub-subfamily. As to quaternary structure, homotetramer; forms a functional homotetrameric channel resulting in the expression of a small M-current. Heterotetramer with KCNQ3; forms heterotetrameric M-channel responsible for the native M-current. Heterotetramer with KCNQ1; forms a functional voltage-gated potassium channel. Interacts (via C-terminus) with calmodulin/CALM; forms a heterooctameric structure (with 4:4 KCNQ1:CALM stoichiometry); the interaction is calcium-independent, constitutive and participates in the channel function. As to expression, strongly expressed in brain. Also expressed in colon, lung and uterus.

The protein resides in the cell membrane. It carries out the reaction K(+)(in) = K(+)(out). Phosphatidylinositol-4,5-bisphosphate (PIP2) is essential to activate KCNQ5 channel by inducing the coupling of the voltage-sensing domain (VSD) and the pore-forming domain (PD). Calcium suppresses KCNQ5 channel current through calcium-bound CALM C-terminus. Therefore CALM acts as calcium sensor that controls channel activity. Zinc potentiates channel activity in a pH-dependent manner. The activity is modulated by small changes in cell volume. Activated by the anticonvulsant retigabine. Inhibited by linopirdine and XE991. Pore-forming subunit of the voltage-gated potassium (Kv) channel broadly expressed in brain and skeletal muscle and involved in the regulation of neuronal excitability. Associates with KCNQ3/Kv7.3 pore-forming subunit to form a potassium channel which contributes to M-type current, a slowly activating and deactivating potassium conductance which plays a critical role in determining the subthreshold electrical excitability of neurons. Contributes, with other potassium channels, to the molecular diversity of a heterogeneous population of M-channels, varying in kinetic and pharmacological properties, which underlie this physiologically important current. Also forms a functional channel with KCNQ1/Kv7.1 subunit that may contribute to vasoconstriction and hypertension. Channel may be selectively permeable in vitro to other cations besides potassium, in decreasing order of affinity K(+) = Rb(+) &gt; Cs(+) &gt; Na(+). The sequence is that of Potassium voltage-gated channel subfamily KQT member 5 from Mus musculus (Mouse).